Reading from the N-terminus, the 273-residue chain is MKLDTSGLETTMPVIGFGSNSEMLDGFSSAPSFDLPRTTDFDGFQKKAVEMVKPAKGTTTLAFIFKEGVMVAADSRASMGGYISSQSVKKIIEINPYMLGTMAGGAADCQFWHRNLGIKCRLHELANKRRISVSGASKLLANMLYSYRGMGLSVGTMIAGWDETGPGLYYVDNEGGRLKGDRFSVGSGSPYAYGVLDSGYKFDMSVEEASELARRSIYHATFRDGASGGVASVYHVGPQGWTKLSGDDVGELHYHYYPVAPITAEHVMEEAAE.

Positions 1–57 are cleaved as a propeptide — removed in mature form; sequence MKLDTSGLETTMPVIGFGSNSEMLDGFSSAPSFDLPRTTDFDGFQKKAVEMVKPAKG. T58 serves as the catalytic Nucleophile.

Belongs to the peptidase T1B family. As to quaternary structure, component of the 20S core complex of the 26S proteasome. The 26S proteasome is composed of a core protease (CP), known as the 20S proteasome, capped at one or both ends by the 19S regulatory particle (RP/PA700). The 20S proteasome core is composed of 28 subunits that are arranged in four stacked rings, resulting in a barrel-shaped structure. The two end rings are each formed by seven alpha subunits, and the two central rings are each formed by seven beta subunits. The catalytic chamber with the active sites is on the inside of the barrel.

The protein resides in the cytoplasm. Its subcellular location is the nucleus. It carries out the reaction Cleavage of peptide bonds with very broad specificity.. Functionally, the proteasome is a multicatalytic proteinase complex which is characterized by its ability to cleave peptides with Arg, Phe, Tyr, Leu, and Glu adjacent to the leaving group at neutral or slightly basic pH. The proteasome has an ATP-dependent proteolytic activity. The protein is Proteasome subunit beta type-5-B (PBE2) of Arabidopsis thaliana (Mouse-ear cress).